The primary structure comprises 848 residues: Trimethylamine-N-oxide reductase 1 (848 aa).

Residues 1–39 (MNNNDLFQASRRRFLAQLGGLTVAGMLGPSLLTSRRATA) constitute a signal peptide (tat-type signal). A Mo-bis(molybdopterin guanine dinucleotide)-binding site is contributed by serine 191.

This sequence belongs to the prokaryotic molybdopterin-containing oxidoreductase family. In terms of assembly, interacts with the N-terminal domain of TorC. The cofactor is Mo-bis(molybdopterin guanine dinucleotide). Predicted to be exported by the Tat system. The position of the signal peptide cleavage has not been experimentally proven.

It localises to the periplasm. The catalysed reaction is trimethylamine + 2 Fe(III)-[cytochrome c] + H2O = trimethylamine N-oxide + 2 Fe(II)-[cytochrome c] + 3 H(+). Its function is as follows. Reduces trimethylamine-N-oxide (TMAO) into trimethylamine; an anaerobic reaction coupled to energy-yielding reactions. The chain is Trimethylamine-N-oxide reductase 1 (torA) from Escherichia coli O157:H7.